Consider the following 85-residue polypeptide: Sec-independent protein translocase protein TatA (85 aa).

A helical transmembrane segment spans residues 1–21 (MGGISIWQLLIIALIVVLLFG). The disordered stretch occupies residues 43–85 (MSSDEDKKALEDAEAAKSVQTAQTAQPTQQATEKKPESNKEQA). The segment covering 46–57 (DEDKKALEDAEA) has biased composition (basic and acidic residues). Residues 58–73 (AKSVQTAQTAQPTQQA) show a composition bias toward low complexity. Residues 74 to 85 (TEKKPESNKEQA) show a composition bias toward basic and acidic residues.

The protein belongs to the TatA/E family. The Tat system comprises two distinct complexes: a TatABC complex, containing multiple copies of TatA, TatB and TatC subunits, and a separate TatA complex, containing only TatA subunits. Substrates initially bind to the TatABC complex, which probably triggers association of the separate TatA complex to form the active translocon.

The protein localises to the cell inner membrane. In terms of biological role, part of the twin-arginine translocation (Tat) system that transports large folded proteins containing a characteristic twin-arginine motif in their signal peptide across membranes. TatA could form the protein-conducting channel of the Tat system. This is Sec-independent protein translocase protein TatA from Shewanella sp. (strain ANA-3).